The sequence spans 244 residues: Cell division protein DivIB (244 aa).

The Cytoplasmic segment spans residues 1 to 6; it reads MKIKWP. A helical transmembrane segment spans residues 7 to 27; sequence LQLWISLAVFVTIAVGTLLLL. The region spanning 28–104 is the POTRA domain; it reads QPWQTIKTVT…IDIAEKVTAG (77 aa). Residues 28–244 lie on the Extracellular side of the membrane; sequence QPWQTIKTVT…KADNKAHQKQ (217 aa).

This sequence belongs to the FtsQ/DivIB family. DivIB subfamily.

The protein localises to the cell membrane. Its function is as follows. Cell division protein that may be involved in stabilizing or promoting the assembly of the division complex. In Leuconostoc kimchii (strain IMSNU 11154 / KCTC 2386 / IH25), this protein is Cell division protein DivIB.